Consider the following 736-residue polypeptide: MYFSSFLALGALVQAAAATYFAPNSTGLRIQHGFETILIQPFGYDGFRVRAWPFRPPSGNEISFIYDPPIEGYEDTAHGMSYDTATTGTEPRTLRNGNIILRTTGWGGTTAGYRLSFYRVNDDGSETLLTNEYAPLKSLNPRYYYWPGPGAEFSAEFSFSATPDEQIYGTGTQQDHMINKKGSVIDMVNFNSYIPTPVFMSNKGYAFIWNMPAEGRMEFGTLRTRFTAASTTLVDYVIVAAQPGDYDTLQQRISALTGRAPAPPDFSLGYIQSKLRYENQTEVELLAQNFHDRNIPVSMIVIDYQSWAHQGDWALDPRLWPNVAQMSARVKNLTGAEMMASLWPSVADDSVNYAALQANGLLSATRDGPGTTDSWNGSYIRNYDSTNPSARKFLWSMLKKNYYDKGIKNFWIDQADGGALGEAYENNGQSTYIESIPFTLPNVNYAAGTQLSVGKLYPWAHQQAIEEGFRNATDTKEGSACDHVSLSRSGYIGSQRFCSMIWSGDTTSVWDTLAVQVASGLSAAATGWGWWTVDAGGFEVDSTVWWSGNIDTPEYRELYVRWLAWTTFLPFMRTHGSRTCYFQDAYTCANEPWSYGASNTPIIVSYIHLRYQLGAYLKSIFNQFHLTGRSIMRPLYMDFEKTDPKISQLVSSNSNYTTQQYMFGPRLLVSPVTLPNVTEWPVYLPQTGQNNTKPWTYWWTNETYAGGQVVKVPAPLQHIPVFHLGSREELLSGNVF.

The first 18 residues, 1 to 18, serve as a signal peptide directing secretion; it reads MYFSSFLALGALVQAAAA. Asn24, Asn279, Asn332, and Asn376 each carry an N-linked (GlcNAc...) asparagine glycan. Residue Asp413 is part of the active site. The N-linked (GlcNAc...) asparagine glycan is linked to Asn471. Asp505 (proton donor) is an active-site residue. N-linked (GlcNAc...) asparagine glycans are attached at residues Asn655, Asn676, Asn690, and Asn701.

Belongs to the glycosyl hydrolase 31 family.

It is found in the secreted. The catalysed reaction is Hydrolysis of terminal, non-reducing alpha-D-xylose residues with release of alpha-D-xylose.. Catalyzes the liberation of alpha-xylose from the non-reducing terminal glucose of xyloglucan oligosaccharides. In Aspergillus niger (strain ATCC MYA-4892 / CBS 513.88 / FGSC A1513), this protein is Alpha-xylosidase A.